A 279-amino-acid chain; its full sequence is Movement protein (279 aa).

The interval Glu247–Leu279 is disordered. The segment covering Glu254 to Ser268 has biased composition (low complexity).

Belongs to the cucumovirus movement protein family.

The protein localises to the host cell junction. The protein resides in the host plasmodesma. Its function is as follows. Transports viral genome to neighboring plant cells directly through plasmosdesmata, without any budding. The movement protein allows efficient cell to cell propagation, by bypassing the host cell wall barrier. Acts by forming a tubular structure at the host plasmodesmata, enlarging it enough to allow free passage of virion capsids. This chain is Movement protein, found in Cucumis sativus (Cucumber).